The chain runs to 504 residues: Glucan endo-1,3-beta-glucosidase 7 (504 aa).

Positions 1 to 22 (MALSISIYFLLIFLSHFPSSHA) are cleaved as a signal peptide. The active-site Proton donor is glutamate 119. Glutamate 264 acts as the Nucleophile in catalysis. The cysteines at positions 365 and 427 are disulfide-linked.

This sequence belongs to the glycosyl hydrolase 17 family. Post-translationally, contains two additional disulfide bonds.

The protein resides in the secreted. Its subcellular location is the cell wall. It carries out the reaction Hydrolysis of (1-&gt;3)-beta-D-glucosidic linkages in (1-&gt;3)-beta-D-glucans.. The sequence is that of Glucan endo-1,3-beta-glucosidase 7 from Arabidopsis thaliana (Mouse-ear cress).